Here is a 523-residue protein sequence, read N- to C-terminus: MSQQVVIFDTTLRDGEQALQASLSVKEKLQIALALERMGVDVMEVGFPVSSPGDFESVQTIARTIKNSRVCALARCVEKDIDVAAESLKVAEAFRIHTFIATSPMHIATKLRSTLDEVIERAVYMIKRARHYTDDVEFSCEDAGRTPIADLARVVEAAINAGAKTINIPDTVGYTMPFEFSNIITGLYERVPNIDQAIISVHTHDDLGLAVGNAIAAVHAGARQVEGAMNGIGERAGNCSLEEVIMAIKVRKDIMNVQTRINHNEIWRTSQTVSQICNMPIPANKAIVGTGAFAHSSGIHQDGVLKNRENYEIMTPESIGLNQVQLNLTSRSGRAAVKHRMEEMGYKETDYNMDHLYDAFLKLADKKGQVFDYDLEAIAFINKQQEEPEHFRMDYFSVQSGSSDIATASVKLACGDEIKAEAANGNGPVDAIYQAINRVTGYDVELVKYDLSAKGHGKDALGQVDIVVTYNGRRFHGVGLATDIVESSAKAMVHVLNNIWRAAEVEKELQRKAQNKENNKETV.

The 263-residue stretch at 5-267 (VVIFDTTLRD…QTRINHNEIW (263 aa)) folds into the Pyruvate carboxyltransferase domain. Mn(2+) is bound by residues Asp-14, His-202, His-204, and Asn-238. The tract at residues 392 to 523 (RMDYFSVQSG…QNKENNKETV (132 aa)) is regulatory domain.

This sequence belongs to the alpha-IPM synthase/homocitrate synthase family. LeuA type 1 subfamily. Homodimer. Mn(2+) serves as cofactor.

It is found in the cytoplasm. The enzyme catalyses 3-methyl-2-oxobutanoate + acetyl-CoA + H2O = (2S)-2-isopropylmalate + CoA + H(+). Its pathway is amino-acid biosynthesis; L-leucine biosynthesis; L-leucine from 3-methyl-2-oxobutanoate: step 1/4. Catalyzes the condensation of the acetyl group of acetyl-CoA with 3-methyl-2-oxobutanoate (2-ketoisovalerate) to form 3-carboxy-3-hydroxy-4-methylpentanoate (2-isopropylmalate). The protein is 2-isopropylmalate synthase of Enterobacter sp. (strain 638).